Consider the following 370-residue polypeptide: Acyl-CoA:lysophosphatidylglycerol acyltransferase 1 (370 aa).

Residues 22–42 form a helical membrane-spanning segment; that stretch reads FAFMVVNNLVAIPSYICYVII. An HXXXXD motif motif is present at residues 101–106; sequence HQATGD. A helical membrane pass occupies residues 342-362; the sequence is LWIFLIQSFAFLSGYMWYNII.

The protein belongs to the 1-acyl-sn-glycerol-3-phosphate acyltransferase family. In terms of tissue distribution, highly expressed in liver and placenta. Also expressed in peripheral blood, lung, kidney and brain. Detected at lower levels in colon. High expression is detected in brain and testis.

The protein localises to the endoplasmic reticulum membrane. The catalysed reaction is a 2-acyl-sn-glycero-3-phosphoethanolamine + octadecanoyl-CoA = 1-octadecanoyl-2-acyl-sn-glycero-3-phosphoethanolamine + CoA. The enzyme catalyses 2-(9Z-octadecenoyl)-sn-glycero-3-phosphoethanolamine + octadecanoyl-CoA = 1-octadecanoyl-2-(9Z-octadecenoyl)-sn-glycero-3-phosphoethanolamine + CoA. It catalyses the reaction a 2-acyl-sn-glycero-3-phosphoethanolamine + hexadecanoyl-CoA = 1-hexadecanoyl-2-acyl-sn-glycero-3-phosphoethanolamine + CoA. It carries out the reaction 2-(9Z-octadecenoyl)-sn-glycero-3-phosphoethanolamine + hexadecanoyl-CoA = 1-hexadecanoyl-2-(9Z-octadecenoyl)-sn-glycero-3-phosphoethanolamine + CoA. The catalysed reaction is 1-tetradecanoyl-sn-glycero-3-phospho-(1'-sn-glycerol) + hexadecanoyl-CoA = 1-tetradecanoyl-2-hexadecanoyl-sn-glycero-3-phospho-(1'-sn-glycerol) + CoA. The enzyme catalyses 1-hexadecanoyl-sn-glycero-3-phospho-(1'-sn-glycerol) + dodecanoyl-CoA = 1-hexadecanoyl-2-dodecanoyl-sn-glycero-3-phospho-(1'-sn-glycerol) + CoA. It catalyses the reaction 1-hexadecanoyl-sn-glycero-3-phospho-(1'-sn-glycerol) + hexadecanoyl-CoA = 1,2-dihexadecanoyl-sn-glycero-3-phospho-(1'-sn-glycerol) + CoA. It carries out the reaction 1-hexadecanoyl-sn-glycero-3-phospho-(1'-sn-glycerol) + octadecanoyl-CoA = 1-hexadecanoyl-2-octadecanoyl-sn-glycero-3-phospho-(1'-sn-glycerol) + CoA. The catalysed reaction is 1-octadecanoyl-sn-glycero-3-phospho-(1'-sn-glycerol) + hexadecanoyl-CoA = 1-octadecanoyl-2-hexadecanoyl-sn-glycero-3-phospho-(1'-sn-glycerol) + CoA. The enzyme catalyses 1-(9Z-octadecenoyl)-sn-glycero-3-phospho-(1'-sn-glycerol) + dodecanoyl-CoA = 1-(9Z-octadecenoyl)-2-dodecanoyl-sn-glycero-3-phospho-(1'-sn-glycerol) + CoA. It catalyses the reaction 1-hexadecanoyl-sn-glycero-3-phospho-(1'-sn-glycerol) + (9Z)-octadecenoyl-CoA = 1-hexadecanoyl-2-(9Z-octadecenoyl)-sn-glycero-3-phospho-(1'-sn-glycerol) + CoA. It carries out the reaction 1-(9Z-octadecenoyl)-sn-glycero-3-phospho-(1'-sn-glycerol) + hexadecanoyl-CoA = 1-(9Z-octadecenoyl)-2-hexadecanoyl-sn-glycero-3-phospho-(1'-sn-glycerol) + CoA. The catalysed reaction is 1-(9Z-octadecenoyl)-sn-glycero-3-phospho-(1'-sn-glycerol) + (9Z)-octadecenoyl-CoA = 1,2-di-(9Z-octadecenoyl)-sn-glycero-3-phospho-(1'-sn-glycerol) + CoA. The enzyme catalyses a 2-acylglycerol + an acyl-CoA = a 1,2-diacylglycerol + CoA. It catalyses the reaction a 2-acylglycerol + hexadecanoyl-CoA = a 1-hexadecanoyl-2-acylglycerol + CoA. It carries out the reaction a 1-acylglycerol + hexadecanoyl-CoA = an hexadecanoyl-acylglycerol + CoA. The catalysed reaction is a 2-acyl-sn-glycero-3-phosphocholine + an acyl-CoA = a 1,2-diacyl-sn-glycero-3-phosphocholine + CoA. The enzyme catalyses 2-(9Z-octadecenoyl)-sn-glycero-3-phosphocholine + octadecanoyl-CoA = 1-octadecanoyl-2-(9Z-octadecenoyl)-sn-glycero-3-phosphocholine + CoA. It catalyses the reaction 2-(9Z,12Z-octadecadienoyl)-sn-glycero-3-phosphocholine + octadecanoyl-CoA = 1-octadecanoyl-2-(9Z,12Z)-octadecadienoyl-sn-glycero-3-phosphocholine + CoA. It carries out the reaction 2-(5Z,8Z,11Z,14Z)-eicosatetraenoyl-sn-glycero-3-phosphocholine + octadecanoyl-CoA = 1-octadecanoyl-2-(5Z,8Z,11Z,14Z-eicosatetraenoyl)-sn-glycero-3-phosphocholine + CoA. The catalysed reaction is 2-(9Z-octadecenoyl)-sn-glycero-3-phosphocholine + hexadecanoyl-CoA = 1-hexadecanoyl-2-(9Z-octadecenoyl)-sn-glycero-3-phosphocholine + CoA. The enzyme catalyses 2-(9Z-octadecenoyl)-sn-glycero-3-phospho-L-serine + hexadecanoyl-CoA = 1-hexadecanoyl-2-(9Z-octadecenoyl)-sn-glycero-3-phospho-L-serine + CoA. It catalyses the reaction 2-(4Z,7Z,10Z,13Z,16Z,19Z-docosahexaenoyl)-sn-glycero-3-phosphocholine + octadecanoyl-CoA = 1-octadecanoyl-2-(4Z,7Z,10Z,13Z,16Z,19Z-docosahexaenoyl)-sn-glycero-3-phosphocholine + CoA. It carries out the reaction 1-(9Z-octadecenoyl)-sn-glycero-3-phospho-L-serine + octadecanoyl-CoA = 1-(9Z-octadecenoyl)-2-octadecanoyl-sn-glycero-3-phospho-L-serine + CoA. The catalysed reaction is a 2-acyl-sn-glycero-3-phosphoethanolamine + a fatty acyl-CoA = a 1,2-diacyl-sn-glycero-3-phosphoethanolamine + CoA. In terms of biological role, lysophospholipid acyltransferase involved in fatty acyl chain remodeling of glycerophospholipids in the endoplasmic reticulum membrane. Selectively catalyzes the transfer and esterification of saturated long-chain fatty acids from acyl-CoA to the sn-1 position of 1-lyso-2-acyl phosphatidylethanolamines (1-lyso-PE, LPE), with a preference for stearoyl CoA over palmitoyl CoA as acyl donor. Acts in concert with an unknown phospholipase A1 to convert palmitate phosphatidylethanolamine (PE) species into stearate ones. Provides substrates to the PE methylation pathway, controlling stearate/palmitate composition of PE and phosphatidylcholine (PC) species with an overall impact on de novo hepatic lipid synthesis, body fat content and life span. Can acylate lysophosphatidylglycerols (LPG) using various saturated fatty acyl-CoAs as acyl donors. Can also acylate monoacylglycerols with a preference for 2-monoacylglycerols over 1-monoacylglycerols. Has no activity toward lysophosphatidic acids (LPA). This Homo sapiens (Human) protein is Acyl-CoA:lysophosphatidylglycerol acyltransferase 1.